The sequence spans 965 residues: Meiosis-specific coiled-coil domain-containing protein MEIOC (965 aa).

2 disordered regions span residues 1 to 22 (MEVSGGDTCRPRHPQGLREGPE) and 946 to 965 (VHESINSSNPMNQRGETSKH). Residues 949–965 (SINSSNPMNQRGETSKH) are compositionally biased toward polar residues.

As to quaternary structure, interacts with YTHDC2; binds transcripts that regulate the mitotic cell cycle inhibiting progression into metaphase, thereby allowing meiotic prophase to proceed normally. Interacts with RBM46. Expressed specifically in fetal ovary and postnatal and adult testes (at protein level). In adult testis expressed in spermatocytes, beginning in preleptotene and extending through most stages of meiotic prophase I, including leptotene, zygotene, and pachytene.

The protein resides in the cytoplasm. It is found in the nucleus. Functionally, is required for meiosis completion in both male and female germ cells. Confers stability to numerous meiotic mRNAs in gonads allowing proper initiation and progression into meiosis prophase I. The function may involve YTHDC2 and is independent of induction by retinoic acid (RA). Maintains an extended meiotic prophase I by properly promoting the transition from a mitotic to a meiotic cell cycle program by binding transcripts through its interaction with YTHDC2 that regulate the mitotic cell cycle. In Mus musculus (Mouse), this protein is Meiosis-specific coiled-coil domain-containing protein MEIOC.